A 359-amino-acid chain; its full sequence is N-acetylneuraminate-9-phosphate synthase (359 aa).

N6-acetyllysine occurs at positions 61, 74, and 79. Ser275 is modified (phosphoserine). The residue at position 290 (Lys290) is an N6-acetyllysine. Residues 294-353 enclose the AFP-like domain; the sequence is SVVAKVKIPEGTILTMDMLTVKVGEPKGYPPEDIFNLVGKKVLVTVEEDDTIMEELVDNH.

Ubiquitous.

It carries out the reaction aldehydo-N-acetyl-D-mannosamine 6-phosphate + phosphoenolpyruvate + H2O = N-acetylneuraminate 9-phosphate + phosphate. The enzyme catalyses aldehydo-D-mannose 6-phosphate + phosphoenolpyruvate + H2O = 3-deoxy-D-glycero-beta-D-galacto-non-2-ulopyranosonate 9-phosphate + phosphate. Catalyzes the condensation of phosphoenolpyruvate (PEP) and N-acetylmannosamine 6-phosphate (ManNAc-6-P) to synthesize N-acetylneuraminate-9-phosphate (Neu5Ac-9-P). Also catalyzes the condensation of PEP and D-mannose 6-phosphate (Man-6-P) to produce 3-deoxy-D-glycero-beta-D-galacto-non-2-ulopyranosonate 9-phosphate (KDN-9-P). Neu5Ac-9-P and KDN-9-P are the phosphorylated forms of sialic acids N-acetylneuraminic acid (Neu5Ac) and deaminoneuraminic acid (KDN), respectively. Required for brain and skeletal development. The polypeptide is N-acetylneuraminate-9-phosphate synthase (Homo sapiens (Human)).